The primary structure comprises 376 residues: CYP enzymes assisting alcohol dehydrogenase (376 aa).

Zn(2+)-binding residues include Cys-43, Thr-45, His-64, Cys-94, Cys-97, Cys-100, Cys-108, and Cys-173. An NAD(+)-binding site is contributed by Thr-45. 2 residues coordinate substrate: Thr-45 and His-64. Residues Gly-199–Gly-204, Asp-223, Lys-228, Leu-294–Ala-296, Phe-320, and Lys-371 contribute to the NAD(+) site.

The protein belongs to the zinc-containing alcohol dehydrogenase family. Class-III subfamily. In terms of assembly, homodimer. Zn(2+) is required as a cofactor.

It participates in alkaloid biosynthesis. Its function is as follows. May be a positive catalyzer of strictosidine production by assisting secologanin biosynthesis, thus being involved in monoterpene indole alkaloids accumulation. The protein is CYP enzymes assisting alcohol dehydrogenase of Catharanthus roseus (Madagascar periwinkle).